Reading from the N-terminus, the 64-residue chain is Prokaryotic ubiquitin-like protein Pup (64 aa).

The tract at residues 1-32 (MNAKQTQIMGGGGRDEDNAEDSAQASGQVQIN) is disordered. Residues 20–58 (EDSAQASGQVQINTEGVDSLLDEIDGLLENNAEEFVRSY) form an ARC ATPase binding region. Residues 21-32 (DSAQASGQVQIN) are compositionally biased toward polar residues. An Isoglutamyl lysine isopeptide (Glu-Lys) (interchain with K-? in acceptor proteins) cross-link involves residue Glu64.

This sequence belongs to the prokaryotic ubiquitin-like protein family. As to quaternary structure, strongly interacts with the proteasome-associated ATPase ARC through a hydrophobic interface; the interacting region of Pup lies in its C-terminal half. There is one Pup binding site per ARC hexamer ring.

The protein operates within protein degradation; proteasomal Pup-dependent pathway. In terms of biological role, protein modifier that is covalently attached to lysine residues of substrate proteins, thereby targeting them for proteasomal degradation. The tagging system is termed pupylation. In Corynebacterium glutamicum (strain R), this protein is Prokaryotic ubiquitin-like protein Pup.